Reading from the N-terminus, the 808-residue chain is uncharacterized protein (808 aa).

35–42 (GPNNVGKT) lines the ATP pocket.

This is an uncharacterized protein from Methanocaldococcus jannaschii (strain ATCC 43067 / DSM 2661 / JAL-1 / JCM 10045 / NBRC 100440) (Methanococcus jannaschii).